Here is a 264-residue protein sequence, read N- to C-terminus: Thymidylate synthase (264 aa).

Arg21 is a binding site for dUMP. Residue His51 coordinates (6R)-5,10-methylene-5,6,7,8-tetrahydrofolate. 126–127 (RR) contributes to the dUMP binding site. Cys146 functions as the Nucleophile in the catalytic mechanism. Residues 166 to 169 (RSAD), Asn177, and 207 to 209 (HLY) contribute to the dUMP site. Asp169 contacts (6R)-5,10-methylene-5,6,7,8-tetrahydrofolate. Residue Ala263 participates in (6R)-5,10-methylene-5,6,7,8-tetrahydrofolate binding.

Belongs to the thymidylate synthase family. Bacterial-type ThyA subfamily. As to quaternary structure, homodimer.

The protein localises to the cytoplasm. It carries out the reaction dUMP + (6R)-5,10-methylene-5,6,7,8-tetrahydrofolate = 7,8-dihydrofolate + dTMP. It functions in the pathway pyrimidine metabolism; dTTP biosynthesis. In terms of biological role, catalyzes the reductive methylation of 2'-deoxyuridine-5'-monophosphate (dUMP) to 2'-deoxythymidine-5'-monophosphate (dTMP) while utilizing 5,10-methylenetetrahydrofolate (mTHF) as the methyl donor and reductant in the reaction, yielding dihydrofolate (DHF) as a by-product. This enzymatic reaction provides an intracellular de novo source of dTMP, an essential precursor for DNA biosynthesis. In Azoarcus sp. (strain BH72), this protein is Thymidylate synthase.